We begin with the raw amino-acid sequence, 672 residues long: Outer dynein arm-docking complex subunit 4 (672 aa).

TPR repeat units lie at residues F13–D46, N48–F80, C81–R114, L275–E311, G320–Y353, S360–T393, T397–E430, and L437–V470. The span at R527–D544 shows a compositional bias: basic and acidic residues. A disordered region spans residues R527–E672. Positions E545–F555 are enriched in acidic residues. Basic and acidic residues-rich tracts occupy residues E595–G650 and G658–E672.

Component of the outer dynein arm-docking complex along with ODAD1, ODAD2 and ODAD3. Interacts with ODAD1; this interaction may facilitate the recruitment and/or attachment of outer dynein arm docking complex proteins, including ODAD1, ODAD3 and ODAD2, to ciliary axonemes. Interacts with components of the IFT complex A, including IFT140, TTC21B/IFT139 and WDR19/IFT144, and the IFT complex B, including IFT46, IFT52 and IFT57. Interacts with CFAP53. In terms of tissue distribution, expressed in the nasal mucosa (at protein level).

It is found in the cytoplasm. It localises to the cytoskeleton. The protein resides in the cilium axoneme. Component of the outer dynein arm-docking complex (ODA-DC) that mediates outer dynein arms (ODA) binding onto the doublet microtubule. Plays an essential role for the assembly of ODA-DC and for the docking of ODA in ciliary axoneme. The protein is Outer dynein arm-docking complex subunit 4 of Homo sapiens (Human).